The following is a 454-amino-acid chain: Kynurenine--oxoglutarate transaminase 3 (454 aa).

Glycine 71 is a substrate binding site. The residue at position 116 (lysine 116) is an N6-acetyllysine; alternate. Position 116 is an N6-succinyllysine; alternate (lysine 116). Residue asparagine 218 participates in substrate binding. Lysine 280 is modified (N6-(pyridoxal phosphate)lysine). Arginine 429 provides a ligand contact to substrate.

The protein belongs to the class-I pyridoxal-phosphate-dependent aminotransferase family. Homodimer. Pyridoxal 5'-phosphate serves as cofactor.

It catalyses the reaction L-kynurenine + 2-oxoglutarate = kynurenate + L-glutamate + H2O. The enzyme catalyses L-kynurenine + glyoxylate = kynurenate + glycine + H2O. The catalysed reaction is 3-hydroxy-L-kynurenine + glyoxylate = xanthurenate + glycine + H2O. It carries out the reaction an S-substituted L-cysteine + H2O = a thiol + pyruvate + NH4(+). It functions in the pathway amino-acid degradation; L-kynurenine degradation; kynurenate from L-kynurenine: step 1/2. Its function is as follows. Catalyzes the irreversible transamination of the L-tryptophan metabolite L-kynurenine to form kynurenic acid (KA), an intermediate in the tryptophan catabolic pathway which is also a broad spectrum antagonist of the three ionotropic excitatory amino acid receptors among others. May catalyze the beta-elimination of S-conjugates and Se-conjugates of L-(seleno)cysteine, resulting in the cleavage of the C-S or C-Se bond. Has transaminase activity towards L-kynurenine, tryptophan, phenylalanine, serine, cysteine, methionine, histidine, glutamine and asparagine with glyoxylate as an amino group acceptor (in vitro). Has lower activity with 2-oxoglutarate as amino group acceptor (in vitro). In Rattus norvegicus (Rat), this protein is Kynurenine--oxoglutarate transaminase 3.